The following is a 395-amino-acid chain: S-adenosylmethionine synthase (395 aa).

His-15 contacts ATP. Mg(2+) is bound at residue Asp-17. Residue Glu-43 coordinates K(+). Glu-56 and Gln-99 together coordinate L-methionine. Residues 99-109 are flexible loop; the sequence is QSPDIAMGVDE. Residues 173–175, 239–240, Asp-248, 254–255, Ala-271, and Lys-275 each bind ATP; these read DGK, RF, and RK. Asp-248 is a binding site for L-methionine. Lys-279 contributes to the L-methionine binding site.

It belongs to the AdoMet synthase family. Homotetramer; dimer of dimers. Mg(2+) is required as a cofactor. The cofactor is K(+).

Its subcellular location is the cytoplasm. The catalysed reaction is L-methionine + ATP + H2O = S-adenosyl-L-methionine + phosphate + diphosphate. It functions in the pathway amino-acid biosynthesis; S-adenosyl-L-methionine biosynthesis; S-adenosyl-L-methionine from L-methionine: step 1/1. In terms of biological role, catalyzes the formation of S-adenosylmethionine (AdoMet) from methionine and ATP. The overall synthetic reaction is composed of two sequential steps, AdoMet formation and the subsequent tripolyphosphate hydrolysis which occurs prior to release of AdoMet from the enzyme. This chain is S-adenosylmethionine synthase, found in Desulforudis audaxviator (strain MP104C).